Here is a 494-residue protein sequence, read N- to C-terminus: Cobyric acid synthase (494 aa).

The region spanning 252–444 (DLNIAVIRLP…LHGLFDNGPW (193 aa)) is the GATase cobBQ-type domain. Cys333 functions as the Nucleophile in the catalytic mechanism. The active site involves His436.

Belongs to the CobB/CobQ family. CobQ subfamily.

It participates in cofactor biosynthesis; adenosylcobalamin biosynthesis. Catalyzes amidations at positions B, D, E, and G on adenosylcobyrinic A,C-diamide. NH(2) groups are provided by glutamine, and one molecule of ATP is hydrogenolyzed for each amidation. This is Cobyric acid synthase from Nostoc punctiforme (strain ATCC 29133 / PCC 73102).